The primary structure comprises 222 residues: Collectrin (222 aa).

Positions M1–A14 are cleaved as a signal peptide. Topologically, residues D15–P141 are extracellular. Residues A21 to L222 enclose the Collectrin-like domain. 2 N-linked (GlcNAc...) asparagine glycosylation sites follow: N76 and N93. A helical membrane pass occupies residues I142 to I162. Residues I163–L222 lie on the Cytoplasmic side of the membrane. Residues T214 and T220 each carry the phosphothreonine modification.

The protein belongs to the CLTRN family. Monomer. Homodimer; dimerization prevents CLTRN cleavage by BACE2. Interacts with SLC6A18; this interaction regulates the trafficking of SLC6A18 to the cell membrane and its amino acid transporter activity. Interacts with SLC6A19; this interaction regulates the trafficking of SLC6A19 to the cell membrane and its amino acid transporter activity. Interacts with SNAPIN. Glycosylated. Glycosylation is required for plasma membrane localization and for its cleavage by BACE2. In terms of processing, proteolytically processed in pancreatic beta cells by BACE2 leading to the generation and extracellular release of soluble CLTRN, and a corresponding cell-associated C-terminal fragment which is later cleaved by gamma-secretase. This shedding process inactivates CLTRN. Three cleavage sites have been identified for BACE2, two clustered sites after Phe-116 and Leu-118 and a more membrane proximal site at Phe-125; the preferred BACE2 cleavage site seems to be between Phe-125 and Leu-126, Phe-116 and Leu-118 act as alternative sites.

The protein resides in the cell membrane. In terms of biological role, plays an important role in amino acid transport by acting as binding partner of amino acid transporters SLC6A18 and SLC6A19, regulating their trafficking on the cell surface and their activity. May also play a role in trafficking of amino acid transporters SLC3A1 and SLC7A9 to the renal cortical cell membrane. Regulator of SNARE complex function. Stimulator of beta cell replication. The chain is Collectrin (CLTRN) from Bos taurus (Bovine).